The following is a 206-amino-acid chain: LexA repressor (206 aa).

Positions 28–48 form a DNA-binding region, H-T-H motif; the sequence is VREIGEAVGLASSSTVHGHLD. Active-site for autocatalytic cleavage activity residues include S128 and K166.

It belongs to the peptidase S24 family. Homodimer.

It catalyses the reaction Hydrolysis of Ala-|-Gly bond in repressor LexA.. Its function is as follows. Represses a number of genes involved in the response to DNA damage (SOS response), including recA and lexA. In the presence of single-stranded DNA, RecA interacts with LexA causing an autocatalytic cleavage which disrupts the DNA-binding part of LexA, leading to derepression of the SOS regulon and eventually DNA repair. This Exiguobacterium sp. (strain ATCC BAA-1283 / AT1b) protein is LexA repressor.